The primary structure comprises 224 residues: Glycerol-3-phosphate acyltransferase (224 aa).

6 helical membrane-spanning segments follow: residues 3–23 (IFLS…IGSL), 54–74 (VFGY…VVFA), 90–112 (LYFY…PIYF), 127–147 (LISI…LLLF), 152–172 (VSLS…IPWM), and 183–203 (GFGQ…LIFW).

It belongs to the PlsY family. As to quaternary structure, probably interacts with PlsX.

It is found in the cell membrane. The enzyme catalyses an acyl phosphate + sn-glycerol 3-phosphate = a 1-acyl-sn-glycero-3-phosphate + phosphate. It participates in lipid metabolism; phospholipid metabolism. Functionally, catalyzes the transfer of an acyl group from acyl-phosphate (acyl-PO(4)) to glycerol-3-phosphate (G3P) to form lysophosphatidic acid (LPA). This enzyme utilizes acyl-phosphate as fatty acyl donor, but not acyl-CoA or acyl-ACP. This Mycoplasmopsis synoviae (strain 53) (Mycoplasma synoviae) protein is Glycerol-3-phosphate acyltransferase.